Reading from the N-terminus, the 128-residue chain is Mediator of RNA polymerase II transcription subunit 31-A (128 aa).

It belongs to the Mediator complex subunit 31 family. In terms of assembly, component of the Mediator complex.

It localises to the nucleus. Component of the Mediator complex, a coactivator involved in the regulated transcription of nearly all RNA polymerase II-dependent genes. Mediator functions as a bridge to convey information from gene-specific regulatory proteins to the basal RNA polymerase II transcription machinery. Mediator is recruited to promoters by direct interactions with regulatory proteins and serves as a scaffold for the assembly of a functional preinitiation complex with RNA polymerase II and the general transcription factors. The sequence is that of Mediator of RNA polymerase II transcription subunit 31-A (med31-a) from Xenopus laevis (African clawed frog).